Reading from the N-terminus, the 218-residue chain is Nucleoid occlusion factor SlmA (218 aa).

One can recognise an HTH tetR-type domain in the interval 30–90 (ERRQQVLTVL…ALIEHIESTL (61 aa)). A DNA-binding region (H-T-H motif) is located at residues 53–72 (TTARLAKEVGVSEAALYRYF).

The protein belongs to the nucleoid occlusion factor SlmA family. In terms of assembly, homodimer. Interacts with FtsZ.

Its subcellular location is the cytoplasm. It localises to the nucleoid. Required for nucleoid occlusion (NO) phenomenon, which prevents Z-ring formation and cell division over the nucleoid. Acts as a DNA-associated cell division inhibitor that binds simultaneously chromosomal DNA and FtsZ, and disrupts the assembly of FtsZ polymers. SlmA-DNA-binding sequences (SBS) are dispersed on non-Ter regions of the chromosome, preventing FtsZ polymerization at these regions. This is Nucleoid occlusion factor SlmA from Haemophilus influenzae (strain PittGG).